Reading from the N-terminus, the 206-residue chain is Ribosomal RNA small subunit methyltransferase G (206 aa).

S-adenosyl-L-methionine is bound by residues G73, L78, V124–E125, and R139.

The protein belongs to the methyltransferase superfamily. RNA methyltransferase RsmG family.

It is found in the cytoplasm. The catalysed reaction is guanosine(527) in 16S rRNA + S-adenosyl-L-methionine = N(7)-methylguanosine(527) in 16S rRNA + S-adenosyl-L-homocysteine. Specifically methylates the N7 position of guanine in position 527 of 16S rRNA. The polypeptide is Ribosomal RNA small subunit methyltransferase G (Pectobacterium atrosepticum (strain SCRI 1043 / ATCC BAA-672) (Erwinia carotovora subsp. atroseptica)).